The primary structure comprises 357 residues: Peptide chain release factor 1 (357 aa).

Residue glutamine 232 is modified to N5-methylglutamine. Over residues lysine 282–arginine 291 the composition is skewed to basic and acidic residues. The disordered stretch occupies residues lysine 282–glutamate 302.

The protein belongs to the prokaryotic/mitochondrial release factor family. In terms of processing, methylated by PrmC. Methylation increases the termination efficiency of RF1.

Its subcellular location is the cytoplasm. Peptide chain release factor 1 directs the termination of translation in response to the peptide chain termination codons UAG and UAA. The sequence is that of Peptide chain release factor 1 from Solidesulfovibrio magneticus (strain ATCC 700980 / DSM 13731 / RS-1) (Desulfovibrio magneticus).